Here is a 118-residue protein sequence, read N- to C-terminus: Holo-[acyl-carrier-protein] synthase (118 aa).

Residues Asp9 and Glu52 each coordinate Mg(2+).

This sequence belongs to the P-Pant transferase superfamily. AcpS family. Mg(2+) serves as cofactor.

It localises to the cytoplasm. The catalysed reaction is apo-[ACP] + CoA = holo-[ACP] + adenosine 3',5'-bisphosphate + H(+). Its function is as follows. Transfers the 4'-phosphopantetheine moiety from coenzyme A to a Ser of acyl-carrier-protein. In Frankia alni (strain DSM 45986 / CECT 9034 / ACN14a), this protein is Holo-[acyl-carrier-protein] synthase.